The sequence spans 357 residues: Peptide chain release factor 1 (357 aa).

Position 234 is an N5-methylglutamine (Gln-234). Residues 284 to 304 form a disordered region; the sequence is RIEGERSEDRKSKIGTGDRSE.

The protein belongs to the prokaryotic/mitochondrial release factor family. Methylated by PrmC. Methylation increases the termination efficiency of RF1.

It is found in the cytoplasm. Functionally, peptide chain release factor 1 directs the termination of translation in response to the peptide chain termination codons UAG and UAA. The protein is Peptide chain release factor 1 of Pelagibacter ubique (strain HTCC1062).